Here is a 65-residue protein sequence, read N- to C-terminus: Large ribosomal subunit protein bL33c (65 aa).

This sequence belongs to the bacterial ribosomal protein bL33 family.

It localises to the plastid. The protein resides in the chloroplast. The chain is Large ribosomal subunit protein bL33c from Staurastrum punctulatum (Green alga).